A 361-amino-acid polypeptide reads, in one-letter code: Outer membrane protein P2 (361 aa).

The signal sequence occupies residues 1 to 20 (MKKTLAALIVGAFAASAANA).

Belongs to the Gram-negative porin family. As to quaternary structure, homotrimer.

Its subcellular location is the cell outer membrane. Its function is as follows. Forms pores that allow passive diffusion of small molecules across the outer membrane. This Haemophilus influenzae protein is Outer membrane protein P2 (ompP2).